A 199-amino-acid chain; its full sequence is Recombination protein RecR (199 aa).

The C4-type zinc-finger motif lies at 57 to 72 (CSICGNFTDRDPCRLC). Positions 80 to 175 (SCICVVEEAR…KVTRLAYGLP (96 aa)) constitute a Toprim domain.

It belongs to the RecR family.

In terms of biological role, may play a role in DNA repair. It seems to be involved in an RecBC-independent recombinational process of DNA repair. It may act with RecF and RecO. This Moorella thermoacetica (strain ATCC 39073 / JCM 9320) protein is Recombination protein RecR.